Reading from the N-terminus, the 251-residue chain is Probable inactive cytidine deaminase 4 (251 aa).

Position 61 to 63 (61 to 63) interacts with substrate; that stretch reads NVE. The Proton donor role is filled by Glu76. Residues 136–251 form the CMP/dCMP-type deaminase domain; sequence EHCSHLKCRA…VFRCHKTAEN (116 aa).

Belongs to the cytidine and deoxycytidylate deaminase family. In terms of assembly, homodimer.

This Arabidopsis thaliana (Mouse-ear cress) protein is Probable inactive cytidine deaminase 4 (CDA4).